We begin with the raw amino-acid sequence, 231 residues long: Ribosyldihydronicotinamide dehydrogenase [quinone] (231 aa).

FAD is bound by residues His-12, 18–21 (FNGS), and 104–107 (LYWF). Substrate is bound at residue 127 to 129 (FDI). FAD is bound by residues 148–151 (TTGG) and Tyr-156. Positions 174 and 178 each coordinate Zn(2+). Asp-194 is a binding site for FAD. Ser-197 bears the Phosphoserine mark. Arg-201 is a binding site for FAD. Cys-223 is a Zn(2+) binding site.

This sequence belongs to the NAD(P)H dehydrogenase (quinone) family. As to quaternary structure, homodimer. Zn(2+) serves as cofactor. FAD is required as a cofactor.

It localises to the cytoplasm. The catalysed reaction is 1-(beta-D-ribofuranosyl)-1,4-dihydronicotinamide + a quinone + H(+) = beta-nicotinamide D-riboside + a quinol. Its function is as follows. The enzyme apparently serves as a quinone reductase in connection with conjugation reactions of hydroquinones involved in detoxification pathways as well as in biosynthetic processes such as the vitamin K-dependent gamma-carboxylation of glutamate residues in prothrombin synthesis. The protein is Ribosyldihydronicotinamide dehydrogenase [quinone] (Nqo2) of Mus musculus (Mouse).